The chain runs to 438 residues: Enolase (438 aa).

Q174 contacts (2R)-2-phosphoglycerate. The Proton donor role is filled by E216. Mg(2+) is bound by residues D253, E297, and D324. Positions 349, 378, 379, and 400 each coordinate (2R)-2-phosphoglycerate. K349 functions as the Proton acceptor in the catalytic mechanism.

This sequence belongs to the enolase family. As to quaternary structure, component of the RNA degradosome, a multiprotein complex involved in RNA processing and mRNA degradation. It depends on Mg(2+) as a cofactor.

It is found in the cytoplasm. The protein localises to the secreted. Its subcellular location is the cell surface. It carries out the reaction (2R)-2-phosphoglycerate = phosphoenolpyruvate + H2O. It participates in carbohydrate degradation; glycolysis; pyruvate from D-glyceraldehyde 3-phosphate: step 4/5. Catalyzes the reversible conversion of 2-phosphoglycerate (2-PG) into phosphoenolpyruvate (PEP). It is essential for the degradation of carbohydrates via glycolysis. The polypeptide is Enolase (Psychrobacter cryohalolentis (strain ATCC BAA-1226 / DSM 17306 / VKM B-2378 / K5)).